Consider the following 563-residue polypeptide: CTP synthase (563 aa).

An amidoligase domain region spans residues 1-280 (MTKFVFVTGG…DEMICMKLQL (280 aa)). Residue Ser13 participates in CTP binding. Ser13 provides a ligand contact to UTP. ATP contacts are provided by residues 14–19 (SLGKGI) and Asp71. Residues Asp71 and Glu154 each contribute to the Mg(2+) site. CTP is bound by residues 161–163 (DIE), 201–206 (KTKPTQ), and Lys237. Residues 201 to 206 (KTKPTQ) and Lys237 each bind UTP. The Glutamine amidotransferase type-1 domain maps to 305-557 (TIAMAGKYTE…IAAALEHHAA (253 aa)). Gly366 contacts L-glutamine. The active-site Nucleophile; for glutamine hydrolysis is the Cys393. L-glutamine is bound by residues 394–397 (LGMQ), Glu417, and Arg483. Residues His530 and Glu532 contribute to the active site.

Belongs to the CTP synthase family. Homotetramer.

It carries out the reaction UTP + L-glutamine + ATP + H2O = CTP + L-glutamate + ADP + phosphate + 2 H(+). It catalyses the reaction L-glutamine + H2O = L-glutamate + NH4(+). The catalysed reaction is UTP + NH4(+) + ATP = CTP + ADP + phosphate + 2 H(+). It participates in pyrimidine metabolism; CTP biosynthesis via de novo pathway; CTP from UDP: step 2/2. Allosterically activated by GTP, when glutamine is the substrate; GTP has no effect on the reaction when ammonia is the substrate. The allosteric effector GTP functions by stabilizing the protein conformation that binds the tetrahedral intermediate(s) formed during glutamine hydrolysis. Inhibited by the product CTP, via allosteric rather than competitive inhibition. Its function is as follows. Catalyzes the ATP-dependent amination of UTP to CTP with either L-glutamine or ammonia as the source of nitrogen. Regulates intracellular CTP levels through interactions with the four ribonucleotide triphosphates. This Leptothrix cholodnii (strain ATCC 51168 / LMG 8142 / SP-6) (Leptothrix discophora (strain SP-6)) protein is CTP synthase.